A 341-amino-acid chain; its full sequence is Brain-specific homeobox/POU domain protein 3 (341 aa).

Residues 55–65 carry the POU-IV box motif; sequence RGAEALAAVDI. The POU-specific domain maps to 182 to 259; it reads ETETDPRELE…ILEAWLEEAE (78 aa). A DNA-binding region (homeobox) is located at residues 277–336; the sequence is KKRKRTSIAAPEKRSLEAYFAVQPRPSSEKIAAIAEKLDLKKNVVRVWFCNQRQKQKRMK.

Belongs to the POU transcription factor family. Class-4 subfamily.

It localises to the nucleus. Its function is as follows. May play a role in specifying terminally differentiated neuronal phenotypes. This chain is Brain-specific homeobox/POU domain protein 3 (BRN3), found in Gallus gallus (Chicken).